The following is a 334-amino-acid chain: Aromatic O-demethylase, reductase subunit (334 aa).

The 91-residue stretch at 1–91 (MTFAVSVGGR…DTEVRSTADA (91 aa)) folds into the 2Fe-2S ferredoxin-type domain. The [2Fe-2S] cluster site is built by C35, C40, C43, and C75. Residues 98-198 (LRDLTATVLE…TGPLGDFHLP (101 aa)) form the FAD-binding FR-type domain. FAD is bound by residues 145 to 148 (RQYS), 162 to 164 (HVR), 170 to 172 (VAT), T215, F330, and S334.

As to quaternary structure, monomer. Forms a heterodimer with GcoA. FAD is required as a cofactor. [2Fe-2S] cluster serves as cofactor.

The enzyme catalyses 2 oxidized [cytochrome P450] + NADH = 2 reduced [cytochrome P450] + NAD(+) + H(+). It functions in the pathway aromatic compound metabolism. In terms of biological role, part of a two-component P450 system that efficiently O-demethylates diverse aromatic substrates such as guaiacol and a wide variety of lignin-derived monomers. Is likely involved in lignin degradation, allowing Amycolatopsis sp. ATCC 39116 to catabolize plant biomass. GcoB transfers electrons from NADH to the cytochrome P450 subunit GcoA. Highly prefers NADH over NADPH as the electron donor. This Amycolatopsis sp. (strain ATCC 39116 / 75iv2) protein is Aromatic O-demethylase, reductase subunit.